Consider the following 85-residue polypeptide: Large ribosomal subunit protein bL27 (85 aa).

Belongs to the bacterial ribosomal protein bL27 family.

The chain is Large ribosomal subunit protein bL27 from Mycobacteroides abscessus (strain ATCC 19977 / DSM 44196 / CCUG 20993 / CIP 104536 / JCM 13569 / NCTC 13031 / TMC 1543 / L948) (Mycobacterium abscessus).